The following is a 161-amino-acid chain: Nucleotide-binding protein NE2248 (161 aa).

The protein belongs to the YajQ family.

In terms of biological role, nucleotide-binding protein. The polypeptide is Nucleotide-binding protein NE2248 (Nitrosomonas europaea (strain ATCC 19718 / CIP 103999 / KCTC 2705 / NBRC 14298)).